The sequence spans 438 residues: Trigger factor (438 aa).

One can recognise a PPIase FKBP-type domain in the interval 170 to 255 (GDTVVIDFDG…IHELKKLETP (86 aa)).

It belongs to the FKBP-type PPIase family. Tig subfamily.

Its subcellular location is the cytoplasm. It catalyses the reaction [protein]-peptidylproline (omega=180) = [protein]-peptidylproline (omega=0). Functionally, involved in protein export. Acts as a chaperone by maintaining the newly synthesized protein in an open conformation. Functions as a peptidyl-prolyl cis-trans isomerase. This Oenococcus oeni (Leuconostoc oenos) protein is Trigger factor (tig).